A 256-amino-acid chain; its full sequence is Chlorophyll a-b binding protein CP24 10B, chloroplastic (256 aa).

The transit peptide at 1-45 (MTTTSATAVLNGLSSSFLTGGKKTQALLGAHVTARVTTPKRFVVA) directs the protein to the chloroplast. Transmembrane regions (helical) follow at residues 106 to 126 (WAMA…IPWF) and 134 to 154 (AIAP…MGWV).

Belongs to the ELIP/psbS family.

The protein localises to the plastid. It localises to the chloroplast thylakoid membrane. This Solanum lycopersicum (Tomato) protein is Chlorophyll a-b binding protein CP24 10B, chloroplastic (CAP10B).